Reading from the N-terminus, the 899-residue chain is Valine--tRNA ligase (899 aa).

A 'HIGH' region motif is present at residues 58 to 68; the sequence is PNVTGVLHIGH. A 'KMSKS' region motif is present at residues 544–548; it reads KMSKS. K547 contributes to the ATP binding site. A coiled-coil region spans residues 836 to 898; sequence GTRLHNQRQK…NAELIALGLQ (63 aa).

It belongs to the class-I aminoacyl-tRNA synthetase family. ValS type 1 subfamily. Monomer.

The protein localises to the cytoplasm. The catalysed reaction is tRNA(Val) + L-valine + ATP = L-valyl-tRNA(Val) + AMP + diphosphate. Its function is as follows. Catalyzes the attachment of valine to tRNA(Val). As ValRS can inadvertently accommodate and process structurally similar amino acids such as threonine, to avoid such errors, it has a 'posttransfer' editing activity that hydrolyzes mischarged Thr-tRNA(Val) in a tRNA-dependent manner. In Helicobacter hepaticus (strain ATCC 51449 / 3B1), this protein is Valine--tRNA ligase.